Consider the following 152-residue polypeptide: Xanthine-guanine phosphoribosyltransferase (152 aa).

5-phospho-alpha-D-ribose 1-diphosphate contacts are provided by residues 37-38 (RG), R69, and 88-96 (DDLVDTGGT). R69 contacts GMP. Position 89 (D89) interacts with Mg(2+). 2 residues coordinate guanine: D92 and I135. The xanthine site is built by D92 and I135. GMP contacts are provided by residues 92–96 (DTGGT) and 134–135 (WI).

Belongs to the purine/pyrimidine phosphoribosyltransferase family. XGPT subfamily. Homotetramer. It depends on Mg(2+) as a cofactor.

The protein localises to the cell inner membrane. The enzyme catalyses GMP + diphosphate = guanine + 5-phospho-alpha-D-ribose 1-diphosphate. It catalyses the reaction XMP + diphosphate = xanthine + 5-phospho-alpha-D-ribose 1-diphosphate. The catalysed reaction is IMP + diphosphate = hypoxanthine + 5-phospho-alpha-D-ribose 1-diphosphate. It participates in purine metabolism; GMP biosynthesis via salvage pathway; GMP from guanine: step 1/1. The protein operates within purine metabolism; XMP biosynthesis via salvage pathway; XMP from xanthine: step 1/1. Functionally, purine salvage pathway enzyme that catalyzes the transfer of the ribosyl-5-phosphate group from 5-phospho-alpha-D-ribose 1-diphosphate (PRPP) to the N9 position of the 6-oxopurines guanine and xanthine to form the corresponding ribonucleotides GMP (guanosine 5'-monophosphate) and XMP (xanthosine 5'-monophosphate), with the release of PPi. To a lesser extent, also acts on hypoxanthine. The sequence is that of Xanthine-guanine phosphoribosyltransferase from Edwardsiella ictaluri (strain 93-146).